We begin with the raw amino-acid sequence, 66 residues long: Ranalexin (66 aa).

Residues 1–20 (MFTLKKSLLLLFFLGTINLS) form the signal peptide. Positions 21 to 44 (LCEEERNAEEERRDNPDERDVEVE) are cleaved as a propeptide — small acidic peptide. A disulfide bridge connects residues cysteine 60 and cysteine 66.

The protein belongs to the frog skin active peptide (FSAP) family. Brevinin subfamily. As to expression, expressed by the skin dorsal glands.

It localises to the secreted. In terms of biological role, potent microbicidal activity, active against S.aureus and E.coli. It also acts as a membrane-disruptive agent at higher concentrations. In Aquarana catesbeiana (American bullfrog), this protein is Ranalexin.